Reading from the N-terminus, the 149-residue chain is Ribosome-binding factor A (149 aa).

Residues Phe125–Asp149 form a disordered region. Residues Val131–Asp143 are compositionally biased toward acidic residues.

The protein belongs to the RbfA family. As to quaternary structure, monomer. Binds 30S ribosomal subunits, but not 50S ribosomal subunits or 70S ribosomes.

Its subcellular location is the cytoplasm. In terms of biological role, one of several proteins that assist in the late maturation steps of the functional core of the 30S ribosomal subunit. Associates with free 30S ribosomal subunits (but not with 30S subunits that are part of 70S ribosomes or polysomes). Required for efficient processing of 16S rRNA. May interact with the 5'-terminal helix region of 16S rRNA. The protein is Ribosome-binding factor A of Shewanella sp. (strain W3-18-1).